A 101-amino-acid chain; its full sequence is Small ribosomal subunit protein uS14 (101 aa).

Residues 36-72 form a disordered region; it reads GTDESREAARAGIQRLPRDASPIRVRNRDGIDGRPRG. Positions 61–70 are enriched in basic and acidic residues; it reads RNRDGIDGRP.

It belongs to the universal ribosomal protein uS14 family. In terms of assembly, part of the 30S ribosomal subunit. Contacts proteins S3 and S10.

In terms of biological role, binds 16S rRNA, required for the assembly of 30S particles and may also be responsible for determining the conformation of the 16S rRNA at the A site. This Clavibacter michiganensis subsp. michiganensis (strain NCPPB 382) protein is Small ribosomal subunit protein uS14.